The following is a 107-amino-acid chain: Heme-degrading monooxygenase (107 aa).

One can recognise an ABM domain in the interval 2-94 (IIVTNTTKIT…YILDNKIAYY (93 aa)). Asn-6 provides a ligand contact to Fe cation. Position 76 (His-76) interacts with heme.

Belongs to the antibiotic biosynthesis monooxygenase family. Heme-degrading monooxygenase IsdG subfamily. As to quaternary structure, homodimer.

Its subcellular location is the cytoplasm. It carries out the reaction heme b + 3 reduced [NADPH--hemoprotein reductase] + 3 O2 = biliverdin IXalpha + CO + Fe(2+) + 3 oxidized [NADPH--hemoprotein reductase] + 3 H2O + H(+). In terms of biological role, allows bacterial pathogens to use the host heme as an iron source. Catalyzes the oxidative degradation of the heme macrocyclic porphyrin ring to the biliverdin in the presence of a suitable electron donor such as ascorbate or NADPH--cytochrome P450 reductase, with subsequent release of free iron. This chain is Heme-degrading monooxygenase, found in Bacillus mycoides (strain KBAB4) (Bacillus weihenstephanensis).